Here is a 422-residue protein sequence, read N- to C-terminus: Protein phosphatase methylesterase 1 (422 aa).

The interval 1–27 (MSDMFRKSVLNKLPHLPPTRAPWADES) is disordered. Active-site residues include serine 207, aspartate 234, and histidine 371.

The protein belongs to the AB hydrolase superfamily.

It carries out the reaction [phosphatase 2A protein]-C-terminal L-leucine methyl ester + H2O = [phosphatase 2A protein]-C-terminal L-leucine + methanol + H(+). Its function is as follows. Demethylates proteins that have been reversibly carboxymethylated. Demethylates the phosphatase PP2A catalytic subunit. This chain is Protein phosphatase methylesterase 1 (PPE1), found in Cryptococcus neoformans var. neoformans serotype D (strain B-3501A) (Filobasidiella neoformans).